Consider the following 725-residue polypeptide: NAD(+) hydrolase SARM1 (725 aa).

A mitochondrion-targeting transit peptide spans 1 to 27; that stretch reads MVLTILFSAYKLCRFFAMSSPRPGAER. The stretch at 60–100 is one ARM 1 repeat; the sequence is EVQGALERALPELQQALSALKQAGGGRAVGAGLAEVFQLVE. Residues Trp-103, Arg-110, 149–158, and 191–194 each bind NAD(+); these read EQILVAENRR and HMFK. 7 ARM repeats span residues 114 to 153, 155 to 194, 197 to 236, 238 to 281, 282 to 315, 316 to 355, and 360 to 403; these read QGLC…QILV, ENRR…HMFK, EETC…NCAM, GGQA…LATN, KEVE…CLVD, ASDT…AEAV, and KNRN…EEVP. SAM domains are found at residues 413-477 and 483-549; these read WKEA…LKTF and CDRS…MLHS. Phosphoserine is present on residues Ser-549 and Ser-559. A TIR domain is found at 561-704; sequence DVPDVFISYR…KIIRFLQGRS (144 aa). NAD(+) contacts are provided by residues 570-571 and Glu-600; that span reads RR. The active site involves Glu-643. The tract at residues 705–725 is disordered; that stretch reads SRDSSAGSDTSLEGAAPMGPT.

This sequence belongs to the SARM1 family. Homooctamer; forms an octameric ring via SAM domains. Interacts with TICAM1/TRIF and thereby interferes with TICAM1/TRIF function. Interacts with MAPK10/JNK3 and SDC2 (via cytoplasmic domain). In terms of processing, phosphorylation at Ser-549 by JNK kinases (MAPK8, MAPK9 and /or MAPK10) enhance the NAD(+) hydrolase (NADase) activity. Phosphorylation at Ser-549 and subsequent activation takes place in response to oxidative stress conditions and inhibits mitochondrial respiration. As to expression, highest expression seen in the spleen and the brain, followed by lung, kidney, liver and other tissues.

The protein resides in the cytoplasm. Its subcellular location is the cell projection. It localises to the axon. It is found in the dendrite. The protein localises to the synapse. The protein resides in the mitochondrion. It carries out the reaction NAD(+) + H2O = ADP-D-ribose + nicotinamide + H(+). The enzyme catalyses NAD(+) = cyclic ADP-beta-D-ribose + nicotinamide + H(+). The catalysed reaction is NADP(+) + H2O = ADP-D-ribose 2'-phosphate + nicotinamide + H(+). With respect to regulation, autoinhibited: in the inactive state, the enzymatic TIR domain is held apart by the autoinhibiting ARM repeats. NAD(+)-binding to ARM repeats maintains an inactive state by promoting interaction between ARM repeats and the TIR domain, thereby facilitating inhibition of the enzymatic TIR domain. Following activation, possibly by nicotinamide mononucleotide (NMN), auto-inhibitory interactions are released, allowing self-association of the TIR domains and subsequent activation of the NAD(+) hydrolase (NADase) activity. Self-association of TIR domains is facilitated by the octamer of SAM domains. In terms of biological role, NAD(+) hydrolase, which plays a key role in axonal degeneration following injury by regulating NAD(+) metabolism. Acts as a negative regulator of MYD88- and TRIF-dependent toll-like receptor signaling pathway by promoting Wallerian degeneration, an injury-induced form of programmed subcellular death which involves degeneration of an axon distal to the injury site. Wallerian degeneration is triggered by NAD(+) depletion: in response to injury, SARM1 is activated and catalyzes cleavage of NAD(+) into ADP-D-ribose (ADPR), cyclic ADPR (cADPR) and nicotinamide; NAD(+) cleavage promoting cytoskeletal degradation and axon destruction. Also able to hydrolyze NADP(+), but not other NAD(+)-related molecules. Can activate neuronal cell death in response to stress. Regulates dendritic arborization through the MAPK4-JNK pathway. Involved in innate immune response: inhibits both TICAM1/TRIF- and MYD88-dependent activation of JUN/AP-1, TRIF-dependent activation of NF-kappa-B and IRF3, and the phosphorylation of MAPK14/p38. The polypeptide is NAD(+) hydrolase SARM1 (Sus scrofa (Pig)).